The primary structure comprises 382 residues: MGGWSALAKLLGKVQAYSPAGGKVWLSVLFIFRILLLGTAVESAWGDEQSAFRCNTQQPGCENVCYDKSFPISHVRFWVLQIIFVSVPTLLYLAHVFYVMRKEEKLNKKEEELKVAQTDGANVDMHLKQIEIKKFKYGIEEHGKVKMRGGLLRTYIISILFKSVFEVAFLLIQWYIYGFSLSAVYTCKREPCPHQVDCFLSRPTEKTIFIIFMLVVSLVSLALNIIELFYVFFKGVKDRVKGQSDPYHATTGPLSPSKDCGSPEYAYFNGCSSPTAPLSPMSPPGYKLVTGDRNNSSCRNYNKQASEQNWANYSAEQNRMGQAGSTISNSHAQPFDFPDDNQNSKKLAAGHELQPLAIVDQRPSSRASSRASSRPRPDDLEI.

Residues 2–23 (GGWSALAKLLGKVQAYSPAGGK) lie on the Cytoplasmic side of the membrane. Position 5 is a phosphoserine (Ser5). A helical membrane pass occupies residues 24 to 44 (VWLSVLFIFRILLLGTAVESA). Residues 45–76 (WGDEQSAFRCNTQQPGCENVCYDKSFPISHVR) lie on the Extracellular side of the membrane. Disulfide bonds link Cys54–Cys192 and Cys187–Cys198. The helical transmembrane segment at 77-97 (FWVLQIIFVSVPTLLYLAHVF) threads the bilayer. Over 98–155 (YVMRKEEKLNKKEEELKVAQTDGANVDMHLKQIEIKKFKYGIEEHGKVKMRGGLLRTY) the chain is Cytoplasmic. A Glycyl lysine isopeptide (Lys-Gly) (interchain with G-Cter in SUMO) cross-link involves residue Lys144. Residues 156–176 (IISILFKSVFEVAFLLIQWYI) traverse the membrane as a helical segment. At 177 to 207 (YGFSLSAVYTCKREPCPHQVDCFLSRPTEKT) the chain is on the extracellular side. The chain crosses the membrane as a helical span at residues 208–228 (IFIIFMLVVSLVSLALNIIEL). The Cytoplasmic segment spans residues 229-382 (FYVFFKGVKD…SRPRPDDLEI (154 aa)). Residue Lys237 forms a Glycyl lysine isopeptide (Lys-Gly) (interchain with G-Cter in SUMO) linkage. Positions 244 to 382 (SDPYHATTGP…SRPRPDDLEI (139 aa)) are interaction with NOV. The residue at position 247 (Tyr247) is a Phosphotyrosine. Phosphoserine occurs at positions 255, 257, and 262. An interaction with UBQLN4 region spans residues 264–382 (EYAYFNGCSS…SRPRPDDLEI (119 aa)). The residue at position 271 (Cys271) is an S-nitrosocysteine. Thr275 is subject to Phosphothreonine. Phosphoserine occurs at positions 306 and 314. The segment covering 317–332 (QNRMGQAGSTISNSHA) has biased composition (polar residues). Residues 317-382 (QNRMGQAGST…SRPRPDDLEI (66 aa)) are disordered. A Phosphoserine; by CK1 modification is found at Ser325. Thr326 is modified (phosphothreonine). A phosphoserine; by CK1 mark is found at Ser328 and Ser330. Ser344 and Ser365 each carry phosphoserine. Residues 362–374 (RPSSRASSRASSR) are compositionally biased toward low complexity. Ser368 is modified (phosphoserine; by PKC/PRKCG and PKC/PRKCD). 2 positions are modified to phosphoserine: Ser369 and Ser373.

The protein belongs to the connexin family. Alpha-type (group II) subfamily. A connexon is composed of a hexamer of connexins. Interacts with SGSM3. Interacts with RIC1/CIP150. Interacts with CNST and CSNK1D. Interacts (via C-terminus) with TJP1. Interacts (via C-terminus) with SRC (via SH3 domain). Interacts (not ubiquitinated) with UBQLN4 (via UBA domain). Interacts with NOV. Interacts with TMEM65. Interacts with ANK3/ANKG and PKP2. Phosphorylation at Ser-325, Ser-328 and Ser-330 by CK1 modulates gap junction assembly. Phosphorylated at Ser-368 by PRKCG; phosphorylation induces disassembly of gap junction plaques and inhibition of gap junction activity. Phosphorylation at Ser-368 by PRKCD triggers its internalization into small vesicles leading to proteasome-mediated degradation. In terms of processing, sumoylated with SUMO1, SUMO2 and SUMO3, which may regulate the level of functional Cx43 gap junctions at the plasma membrane. May be desumoylated by SENP1 or SENP2. Post-translationally, S-nitrosylation at Cys-271 is enriched at the muscle endothelial gap junction in arteries, it augments channel permeability and may regulate of smooth muscle cell to endothelial cell communication. Acetylated in the developing cortex; leading to delocalization from the cell membrane.

The protein localises to the cell membrane. Its subcellular location is the cell junction. It is found in the gap junction. The protein resides in the endoplasmic reticulum. Its function is as follows. Gap junction protein that acts as a regulator of bladder capacity. A gap junction consists of a cluster of closely packed pairs of transmembrane channels, the connexons, through which materials of low MW diffuse from one cell to a neighboring cell. May play a critical role in the physiology of hearing by participating in the recycling of potassium to the cochlear endolymph. Negative regulator of bladder functional capacity: acts by enhancing intercellular electrical and chemical transmission, thus sensitizing bladder muscles to cholinergic neural stimuli and causing them to contract. May play a role in cell growth inhibition through the regulation of NOV expression and localization. Plays an essential role in gap junction communication in the ventricles. The polypeptide is Gap junction alpha-1 protein (GJA1) (Canis lupus familiaris (Dog)).